Consider the following 306-residue polypeptide: 4-diphosphocytidyl-2-C-methyl-D-erythritol kinase (306 aa).

K11 is a catalytic residue. An ATP-binding site is contributed by 113 to 123; the sequence is PPEGGIGGGSS. D153 is a catalytic residue.

It belongs to the GHMP kinase family. IspE subfamily.

It catalyses the reaction 4-CDP-2-C-methyl-D-erythritol + ATP = 4-CDP-2-C-methyl-D-erythritol 2-phosphate + ADP + H(+). It participates in isoprenoid biosynthesis; isopentenyl diphosphate biosynthesis via DXP pathway; isopentenyl diphosphate from 1-deoxy-D-xylulose 5-phosphate: step 3/6. Catalyzes the phosphorylation of the position 2 hydroxy group of 4-diphosphocytidyl-2C-methyl-D-erythritol. The polypeptide is 4-diphosphocytidyl-2-C-methyl-D-erythritol kinase (Leptospira biflexa serovar Patoc (strain Patoc 1 / ATCC 23582 / Paris)).